The primary structure comprises 194 residues: Peptidyl-tRNA hydrolase (194 aa).

TRNA is bound at residue Tyr-17. His-22 functions as the Proton acceptor in the catalytic mechanism. Tyr-69, Asn-71, and Asn-117 together coordinate tRNA.

Belongs to the PTH family. As to quaternary structure, monomer.

The protein resides in the cytoplasm. It catalyses the reaction an N-acyl-L-alpha-aminoacyl-tRNA + H2O = an N-acyl-L-amino acid + a tRNA + H(+). Its function is as follows. Hydrolyzes ribosome-free peptidyl-tRNAs (with 1 or more amino acids incorporated), which drop off the ribosome during protein synthesis, or as a result of ribosome stalling. Catalyzes the release of premature peptidyl moieties from peptidyl-tRNA molecules trapped in stalled 50S ribosomal subunits, and thus maintains levels of free tRNAs and 50S ribosomes. The polypeptide is Peptidyl-tRNA hydrolase (Arthrobacter sp. (strain FB24)).